Reading from the N-terminus, the 409-residue chain is Sprouty-related, EVH1 domain-containing protein 2 (409 aa).

A WH1 domain is found at 5-121 (APPEDDSYIV…RGVRKAIEDL (117 aa)). The tract at residues 121–170 (LTEGSTTSSSTIHNEAELGDDDVFATSTDSSSNSSQKREPPVRTIASPLP) is disordered. Polar residues predominate over residues 123 to 133 (EGSTTSSSTIH). Low complexity predominate over residues 146–155 (TSTDSSSNSS). Residues 199–253 (PHRHVSFPDDDDEIVRINPRERNWLTGYEDYRQAPIHRKYPDTESIDSYVRFAKS) form the KBD domain. Positions 299 to 407 (RCIYCRDMFN…CGCCGGKHKA (109 aa)) constitute an SPR domain.

It localises to the cell membrane. It is found in the cytoplasmic vesicle. The protein localises to the secretory vesicle membrane. The protein resides in the cytoplasm. Functionally, negatively regulates Ras signaling pathways and downstream activation of MAP kinases. This chain is Sprouty-related, EVH1 domain-containing protein 2 (spred2), found in Xenopus tropicalis (Western clawed frog).